Consider the following 250-residue polypeptide: Cell division protein ZapD (250 aa).

It belongs to the ZapD family. In terms of assembly, interacts with FtsZ.

It is found in the cytoplasm. In terms of biological role, cell division factor that enhances FtsZ-ring assembly. Directly interacts with FtsZ and promotes bundling of FtsZ protofilaments, with a reduction in FtsZ GTPase activity. In Pectobacterium carotovorum subsp. carotovorum (strain PC1), this protein is Cell division protein ZapD.